We begin with the raw amino-acid sequence, 1441 residues long: Lysophospholipase NTE1 (1441 aa).

Topologically, residues 1–22 are lumenal; it reads MWLTSYVLPRLKNILLLQFHIT. The helical transmembrane segment at 23 to 43 threads the bilayer; it reads LPLNYLVLLLLSTVIITYLFL. The Cytoplasmic segment spans residues 44–1441; that stretch reads RTRILSNYSQ…ENMLQRRNSI (1398 aa). Disordered regions lie at residues 154 to 173, 210 to 236, 376 to 445, and 551 to 585; these read SNPS…PSND, THLN…TGEI, QDDT…NSSS, and NRTG…HFRN. Residues 376 to 388 are compositionally biased toward polar residues; that stretch reads QDDTGSSASTIQK. The segment covering 572 to 585 has biased composition (basic and acidic residues); the sequence is SRTDRSESFDHFRN. A nucleoside 3',5'-cyclic phosphate contacts are provided by residues 592–718 and 707–836; these read NQFS…LTNS and IYLK…VAKK. One can recognise a PNPLA domain in the interval 1137–1301; the sequence is LVLGGGGARG…VDNLPVTEMT (165 aa). Residues 1141 to 1146 carry the GXGXXG motif; the sequence is GGGARG. A GXSXG motif is present at residues 1168–1172; it reads GTSIG. Ser1170 serves as the catalytic Nucleophile. The active-site Proton acceptor is the Asp1288. A DGA/G motif is present at residues 1288-1290; the sequence is DGG.

This sequence belongs to the NTE family.

The protein resides in the endoplasmic reticulum membrane. It carries out the reaction a 1-acyl-sn-glycero-3-phosphocholine + H2O = sn-glycerol 3-phosphocholine + a fatty acid + H(+). With respect to regulation, inhibited by organophosphorus esters. Its function is as follows. Intracellular phospholipase B that catalyzes the double deacylation of phosphatidylcholine (PC) to glycerophosphocholine (GroPCho). Plays an important role in membrane lipid homeostasis. Responsible for the rapid PC turnover in response to inositol, elevated temperatures, or when choline is present in the growth medium. This is Lysophospholipase NTE1 (NTE1) from Kluyveromyces lactis (strain ATCC 8585 / CBS 2359 / DSM 70799 / NBRC 1267 / NRRL Y-1140 / WM37) (Yeast).